We begin with the raw amino-acid sequence, 379 residues long: GPN-loop GTPase QQT2 (379 aa).

The residue at position 1 (Met1) is an N-acetylmethionine. 51 to 56 (GSGKTS) provides a ligand contact to GTP. Positions 108 to 110 (GPN) match the Gly-Pro-Asn (GPN)-loop; involved in dimer interface motif. GTP contacts are provided by residues 211–214 (NKTD) and Ala267. Positions 288–322 (METYKADLDMRKADKERLEEERKKHEMEKLRKDME) form a coiled coil. Basic and acidic residues-rich tracts occupy residues 303–322 (ERLE…KDME) and 335–346 (LKDRDATEKMML). A disordered region spans residues 303–379 (ERLEEERKKH…EDDETKHYYL (77 aa)). The segment covering 347-372 (EEDDEDFQVEDEEDSDDAIDEDDEDD) has biased composition (acidic residues).

The protein belongs to the GPN-loop GTPase family. In terms of assembly, heterodimer with QQT1. In terms of tissue distribution, expressed in individual cells of roots, leaves and flowers.

The protein resides in the cytoplasm. Its subcellular location is the nucleus. It localises to the cytoskeleton. The protein localises to the spindle. It is found in the phragmoplast. In terms of biological role, small GTPase that is essential for the correct formation of the tangential divisions in early embryos. Associates with microtubule during mitosis and may function in the positioning of the division plane. May participate in the patterning of the early embryo at the octant-dermatogen transition. The protein is GPN-loop GTPase QQT2 of Arabidopsis thaliana (Mouse-ear cress).